A 494-amino-acid chain; its full sequence is Integrin beta-like protein 1 (494 aa).

The signal sequence occupies residues 1–23 (MRPPGFRNFLLLASSLLFAGLSA). 40 disulfide bridges follow: Cys-40-Cys-71, Cys-51-Cys-69, Cys-63-Cys-74, Cys-76-Cys-89, Cys-91-Cys-112, Cys-96-Cys-110, Cys-104-Cys-115, Cys-117-Cys-126, Cys-132-Cys-159, Cys-143-Cys-157, Cys-151-Cys-162, Cys-164-Cys-178, Cys-180-Cys-202, Cys-185-Cys-200, Cys-194-Cys-205, Cys-207-Cys-216, Cys-220-Cys-247, Cys-231-Cys-245, Cys-239-Cys-250, Cys-252-Cys-269, Cys-271-Cys-296, Cys-276-Cys-294, Cys-288-Cys-299, Cys-301-Cys-310, Cys-316-Cys-343, Cys-327-Cys-341, Cys-335-Cys-346, Cys-348-Cys-361, Cys-363-Cys-384, Cys-368-Cys-382, Cys-376-Cys-387, Cys-389-Cys-398, Cys-404-Cys-431, Cys-415-Cys-429, Cys-423-Cys-434, Cys-436-Cys-448, Cys-450-Cys-471, Cys-455-Cys-469, Cys-463-Cys-474, and Cys-476-Cys-485. I-EGF domains are found at residues 40–90 (CRLS…PLCE), 91–127 (CHEW…DACQ), 132–179 (CDLT…KFCE), 180–217 (CDDR…DKCE), 220–270 (CDIT…DTCE), 271–311 (CDER…KKCE), 316–362 (CTLS…KTCE), 363–399 (CDDR…KLCQ), 404–449 (CNMT…EFCD), and 450–486 (CDDR…NACE). One copy of the I repeat lies at 51 to 95 (CRAPGQPPGAALCHGRGRCDCGVCICHVTEPGMFFGPLCECHEWV). Residues 51–494 (CRAPGQPPGA…CEIWLGSEYP (444 aa)) are cysteine-rich tandem repeats. The II repeat unit spans residues 96–142 (CETYDGSTCAGHGKCDCGKCKCDQGWYGDACQYPTNCDLTKKKSNQM). One copy of the III repeat lies at 143-184 (CKNSQDIICSNAGTCHCGRCKCDNSDGSGLVYGKFCECDDRE). The stretch at 185-230 (CIDDETEEICGGHGKCYCGNCYCKAGWHGDKCEFQCDITPWESKRR) is one IV repeat. A V repeat occupies 231–275 (CTSPDGKICSNRGTCVCGECTCHDVDPTGDWGDIHGDTCECDERD). The stretch at 276 to 326 (CRAVYDRYSDDFCSGHGQCNCGRCDCKAGWYGKKCEHPQSCTLSAEESIRK) is one VI repeat. One copy of the VII repeat lies at 327-367 (CQGSSDLPCSGRGKCECGKCTCYPPGDRRVYGKTCECDDRR). Residues 368–414 (CEDLDGVVCGGHGTCSCGRCVCERGWFGKLCQHPRKCNMTEEQSKNL) form a VIII repeat. N-linked (GlcNAc...) asparagine glycosylation occurs at Asn-405. The stretch at 415 to 454 (CESADGILCSGKGSCHCGKCICSAEEWYISGEFCDCDDRD) is one IX repeat. The stretch at 455–494 (CDKHDGLICTGNGICSCGNCECWDGWNGNACEIWLGSEYP) is one X repeat.

As to expression, widely expressed in many tissues, but readily detectable only in aorta.

The protein resides in the secreted. This Homo sapiens (Human) protein is Integrin beta-like protein 1 (ITGBL1).